The primary structure comprises 449 residues: UDP-N-acetylmuramoylalanine--D-glutamate ligase (449 aa).

118–124 (GTNGKTT) contributes to the ATP binding site.

The protein belongs to the MurCDEF family.

It localises to the cytoplasm. The enzyme catalyses UDP-N-acetyl-alpha-D-muramoyl-L-alanine + D-glutamate + ATP = UDP-N-acetyl-alpha-D-muramoyl-L-alanyl-D-glutamate + ADP + phosphate + H(+). Its pathway is cell wall biogenesis; peptidoglycan biosynthesis. Cell wall formation. Catalyzes the addition of glutamate to the nucleotide precursor UDP-N-acetylmuramoyl-L-alanine (UMA). The sequence is that of UDP-N-acetylmuramoylalanine--D-glutamate ligase from Staphylococcus carnosus (strain TM300).